We begin with the raw amino-acid sequence, 159 residues long: ATP synthase subunit delta, mitochondrial (159 aa).

The N-terminal 23 residues, 1–23 (MFRLSAARTLAKSVNTVVAKRTY), are a transit peptide targeting the mitochondrion.

It belongs to the ATPase epsilon chain family. F-type ATPases have 2 components, CF(1) - the catalytic core - and CF(0) - the membrane proton channel. CF(1) has five subunits: alpha(3), beta(3), gamma(1), delta(1), epsilon(1). CF(0) has three main subunits: a, b and c.

It is found in the mitochondrion. It localises to the mitochondrion inner membrane. Functionally, mitochondrial membrane ATP synthase (F(1)F(0) ATP synthase or Complex V) produces ATP from ADP in the presence of a proton gradient across the membrane which is generated by electron transport complexes of the respiratory chain. F-type ATPases consist of two structural domains, F(1) - containing the extramembraneous catalytic core, and F(0) - containing the membrane proton channel, linked together by a central stalk and a peripheral stalk. During catalysis, ATP turnover in the catalytic domain of F(1) is coupled via a rotary mechanism of the central stalk subunits to proton translocation. Part of the complex F(1) domain and of the central stalk which is part of the complex rotary element. Rotation of the central stalk against the surrounding alpha(3)beta(3) subunits leads to hydrolysis of ATP in three separate catalytic sites on the beta subunits. The sequence is that of ATP synthase subunit delta, mitochondrial (ATP16) from Kluyveromyces lactis (strain ATCC 8585 / CBS 2359 / DSM 70799 / NBRC 1267 / NRRL Y-1140 / WM37) (Yeast).